The following is a 623-amino-acid chain: NAD-dependent malic enzyme, mitochondrial (623 aa).

A mitochondrion-targeting transit peptide spans 1-31 (MLVLCSRSRLTSSLIRRLKDQIANVSNHRSF). 2 residues coordinate fumarate: R88 and R122. S143 (proton donor) is an active-site residue. Position 196 (R196) interacts with (S)-malate. R196 is a binding site for NAD(+). K214 (proton acceptor) is an active-site residue. A divalent metal cation is bound by residues E285 and D286. An NAD(+)-binding site is contributed by N289. An a divalent metal cation-binding site is contributed by D309. A345 is a binding site for NAD(+). Residues N464 and N509 each contribute to the (S)-malate site.

It belongs to the malic enzymes family. In terms of assembly, heterodimer of two related subunits. Mg(2+) is required as a cofactor. Requires Mn(2+) as cofactor.

The protein localises to the mitochondrion matrix. It catalyses the reaction (S)-malate + NAD(+) = pyruvate + CO2 + NADH. It participates in photosynthesis; C4 acid pathway. In Amaranthus hypochondriacus (Prince-of-Wales feather), this protein is NAD-dependent malic enzyme, mitochondrial.